Reading from the N-terminus, the 385-residue chain is Elongation factor Ts, mitochondrial (385 aa).

Residues 1–50 constitute a mitochondrion transit peptide; sequence MAWSQSARKPMIGLLFRAQQHGARGYSYSAFQAHLSSSNVDQSATLLRRF.

Belongs to the EF-Ts family.

The protein localises to the mitochondrion. In terms of biological role, associates with the EF-Tu.GDP complex and induces the exchange of GDP to GTP. It remains bound to the aminoacyl-tRNA.EF-Tu.GTP complex up to the GTP hydrolysis stage on the ribosome. The sequence is that of Elongation factor Ts, mitochondrial from Oryza sativa subsp. indica (Rice).